The following is a 251-amino-acid chain: MPRFASPLLRNVIIRSQFDGIKRKQCLQYLKTLRTLQYDGFKTVYFGETNIPESLVTGEDISDGYFIQTPTWCIVHAAGSQGWVPWKYRVFLRDELCIKQEDSLFSEFCDVVRKAYGKCVIVVKERRQQEEQRPKEDREAEGQFYIPTVISLASIMCCPEVAKSCGHELLSLPSPCNYLNPLDSAWSSLKWFIINNRNEFCLQSIDSGYSYQCILFSNLISKGIERINASKWRTLTSKVRRWENYYLGKFS.

The protein belongs to the FAM243 family.

This is an uncharacterized protein from Homo sapiens (Human).